Reading from the N-terminus, the 219-residue chain is Histone H1.4 (219 aa).

The span at 1–15 shows a compositional bias: low complexity; the sequence is MSETAPAAPAAPAPA. The interval 1 to 41 is disordered; the sequence is MSETAPAAPAAPAPAEKTPVKKKARKSAGAAKRKASGPPVS. The residue at position 2 (Ser-2) is an N-acetylserine. Phosphoserine is present on Ser-2. Lys-17 bears the N6-acetyllysine mark. The residue at position 18 (Thr-18) is a Phosphothreonine. Positions 20 to 35 are enriched in basic residues; sequence VKKKARKSAGAAKRKA. At Lys-26 the chain carries N6-acetyllysine; alternate. Lys-26 bears the N6-methyllysine; alternate mark. The residue at position 34 (Lys-34) is an N6-(beta-hydroxybutyryl)lysine; alternate. Lys-34 is modified (N6-succinyllysine; alternate). The residue at position 36 (Ser-36) is a Phosphoserine. The region spanning 36-109 is the H15 domain; sequence SGPPVSELIT…GASGSFKLNK (74 aa). Lys-52 carries the N6-(beta-hydroxybutyryl)lysine modification. A Citrulline modification is found at Arg-54. N6-(beta-hydroxybutyryl)lysine occurs at positions 64, 85, 90, and 106. Positions 91-219 are disordered; the sequence is GTLVQTKGTG…KPKKAPAKKK (129 aa). Residues 119-140 show a composition bias toward basic residues; the sequence is KPKKAGAAKPKKPAGAAKKPKK. Phosphothreonine is present on Thr-146. Basic residues-rich tracts occupy residues 149-160 and 168-185; these read KGAKKTPKKAKK and KKAK…KKAP. Ser-187 carries the phosphoserine modification. Residues 192–219 show a composition bias toward basic residues; the sequence is KAVKPKAAKPKAAKPKTAKPKKAPAKKK.

It belongs to the histone H1/H5 family. H1 histones are progressively phosphorylated during the cell cycle, becoming maximally phosphorylated during late G2 phase and M phase, and being dephosphorylated sharply thereafter. In terms of processing, acetylated at Lys-26. Deacetylated at Lys-26 by SIRT1. Post-translationally, citrullination at Arg-54 (H1R54ci) by PADI4 takes place within the DNA-binding site of H1 and results in its displacement from chromatin and global chromatin decondensation, thereby promoting pluripotency and stem cell maintenance.

The protein localises to the nucleus. The protein resides in the chromosome. Histone H1 protein binds to linker DNA between nucleosomes forming the macromolecular structure known as the chromatin fiber. Histones H1 are necessary for the condensation of nucleosome chains into higher-order structured fibers. Also acts as a regulator of individual gene transcription through chromatin remodeling, nucleosome spacing and DNA methylation. The polypeptide is Histone H1.4 (Oryctolagus cuniculus (Rabbit)).